Here is an 829-residue protein sequence, read N- to C-terminus: Cation/H(+) antiporter 14 (829 aa).

A run of 12 helical transmembrane segments spans residues 48–68 (YAMP…RLLY), 77–97 (GMIS…FGQS), 117–137 (SNLG…ASII), 145–165 (ILIG…TVLF), 180–200 (ISTV…TVLA), 215–235 (NCSI…RMFL), 240–260 (LASV…FFVC), 281–301 (IPFF…EVLG), 329–349 (LEMF…GLQT), 361–383 (IIEA…ASAY), 392–412 (FSLA…CVMW), and 425–445 (LLII…VCLY). Position 827 is a phosphoserine (serine 827).

The protein belongs to the monovalent cation:proton antiporter 2 (CPA2) transporter (TC 2.A.37) family. CHX (TC 2.A.37.4) subfamily. In terms of tissue distribution, preferentially expressed in pollen but also detected in vegetative tissues like leaf trichomes and root vascular tissues.

It localises to the membrane. Its function is as follows. May operate as a cation/H(+) antiporter. The polypeptide is Cation/H(+) antiporter 14 (CHX14) (Arabidopsis thaliana (Mouse-ear cress)).